The primary structure comprises 255 residues: Small ribosomal subunit protein eS1 (255 aa).

Positions 1–18 are enriched in basic residues; it reads MAVGKNKRLSKGKKGLKK. A disordered region spans residues 1 to 28; the sequence is MAVGKNKRLSKGKKGLKKRTQDPFSRKD. At Ala2 the chain carries N-acetylalanine; partial. Positions 19 to 28 are enriched in basic and acidic residues; the sequence is RTQDPFSRKD.

The protein belongs to the eukaryotic ribosomal protein eS1 family. In terms of assembly, component of the small ribosomal subunit. Mature ribosomes consist of a small (40S) and a large (60S) subunit. The 40S subunit contains about 33 different proteins and 1 molecule of RNA (18S). The 60S subunit contains about 49 different proteins and 3 molecules of RNA (25S, 5.8S and 5S).

It localises to the cytoplasm. The sequence is that of Small ribosomal subunit protein eS1 from Ajellomyces capsulatus (strain H143) (Darling's disease fungus).